The sequence spans 307 residues: Aspartate carbamoyltransferase catalytic subunit (307 aa).

Residues R59 and T60 each contribute to the carbamoyl phosphate site. K87 is an L-aspartate binding site. Residues R109, H137, and Q140 each contribute to the carbamoyl phosphate site. R173 and R223 together coordinate L-aspartate. Residues G266 and P267 each coordinate carbamoyl phosphate.

This sequence belongs to the aspartate/ornithine carbamoyltransferase superfamily. ATCase family. Heterododecamer (2C3:3R2) of six catalytic PyrB chains organized as two trimers (C3), and six regulatory PyrI chains organized as three dimers (R2).

The catalysed reaction is carbamoyl phosphate + L-aspartate = N-carbamoyl-L-aspartate + phosphate + H(+). It functions in the pathway pyrimidine metabolism; UMP biosynthesis via de novo pathway; (S)-dihydroorotate from bicarbonate: step 2/3. Its function is as follows. Catalyzes the condensation of carbamoyl phosphate and aspartate to form carbamoyl aspartate and inorganic phosphate, the committed step in the de novo pyrimidine nucleotide biosynthesis pathway. This chain is Aspartate carbamoyltransferase catalytic subunit, found in Helicobacter pylori (strain HPAG1).